The following is a 295-amino-acid chain: Polyadenylate-binding protein 2-B (295 aa).

The segment at methionine 1–glutamine 102 is disordered. 2 stretches are compositionally biased toward gly residues: residues leucine 19–aspartate 31 and glycine 71–glycine 81. Over residues glutamate 83–glycine 96 the composition is skewed to acidic residues. The stretch at aspartate 106 to serine 140 forms a coiled coil. The interval asparagine 145–tyrosine 295 is necessary for homooligomerization. In terms of domain architecture, RRM spans arginine 162 to threonine 239.

In terms of assembly, monomer and homooligomer. Binds RNA as a monomer and oligomerizes when bound to poly(A).

It localises to the nucleus. It is found in the cytoplasm. Functionally, involved in the 3'-end formation of mRNA precursors (pre-mRNA) by the addition of a poly(A) tail of 200-250 nt to the upstream cleavage product. Stimulates poly(A) polymerase (PAPOLA) conferring processivity on the poly(A) tail elongation reaction and also controls the poly(A) tail length. Increases the affinity of poly(A) polymerase for RNA. Binds to poly(A) and to poly(G) with high affinity. May protect the poly(A) tail from degradation. In Xenopus laevis (African clawed frog), this protein is Polyadenylate-binding protein 2-B (pabpn1-b).